We begin with the raw amino-acid sequence, 369 residues long: Phenylalanine--tRNA ligase alpha subunit (369 aa).

Glu269 is a binding site for Mg(2+).

The protein belongs to the class-II aminoacyl-tRNA synthetase family. Phe-tRNA synthetase alpha subunit type 1 subfamily. Tetramer of two alpha and two beta subunits. It depends on Mg(2+) as a cofactor.

Its subcellular location is the cytoplasm. It carries out the reaction tRNA(Phe) + L-phenylalanine + ATP = L-phenylalanyl-tRNA(Phe) + AMP + diphosphate + H(+). The polypeptide is Phenylalanine--tRNA ligase alpha subunit (Brucella ovis (strain ATCC 25840 / 63/290 / NCTC 10512)).